Consider the following 246-residue polypeptide: Probable phosphatase Ssed_2939 (246 aa).

Positions 8, 10, 16, 41, 74, 102, 132, 193, and 195 each coordinate Zn(2+).

Belongs to the PHP family. The cofactor is Zn(2+).

This is Probable phosphatase Ssed_2939 from Shewanella sediminis (strain HAW-EB3).